The primary structure comprises 600 residues: Elongation factor 4 (600 aa).

One can recognise a tr-type G domain in the interval 7–189 (SLIRNFSIIA…ALVQRLPAPT (183 aa)). GTP-binding positions include 19–24 (DHGKST) and 136–139 (NKID).

Belongs to the TRAFAC class translation factor GTPase superfamily. Classic translation factor GTPase family. LepA subfamily.

It is found in the cell inner membrane. It carries out the reaction GTP + H2O = GDP + phosphate + H(+). Required for accurate and efficient protein synthesis under certain stress conditions. May act as a fidelity factor of the translation reaction, by catalyzing a one-codon backward translocation of tRNAs on improperly translocated ribosomes. Back-translocation proceeds from a post-translocation (POST) complex to a pre-translocation (PRE) complex, thus giving elongation factor G a second chance to translocate the tRNAs correctly. Binds to ribosomes in a GTP-dependent manner. This chain is Elongation factor 4, found in Gluconobacter oxydans (strain 621H) (Gluconobacter suboxydans).